The sequence spans 179 residues: MSDLKKIYQDEIAPKLKEELGLGNIMEVPKITKITLNMGVGEASADRKAMEGALSDMTAISGQKPLVTNARKSVAGFKIREGWPIGCKVTMRNQRMYEFLERLVSVAIPRIRDFRGLNPKSFDGRGNFSMGLREQIVFPEIDFDKVDKLRGMDITITTTAKTDDEARALLRAFNFPLKG.

Belongs to the universal ribosomal protein uL5 family. As to quaternary structure, part of the 50S ribosomal subunit; part of the 5S rRNA/L5/L18/L25 subcomplex. Contacts the 5S rRNA and the P site tRNA. Forms a bridge to the 30S subunit in the 70S ribosome.

Functionally, this is one of the proteins that bind and probably mediate the attachment of the 5S RNA into the large ribosomal subunit, where it forms part of the central protuberance. In the 70S ribosome it contacts protein S13 of the 30S subunit (bridge B1b), connecting the 2 subunits; this bridge is implicated in subunit movement. Contacts the P site tRNA; the 5S rRNA and some of its associated proteins might help stabilize positioning of ribosome-bound tRNAs. The polypeptide is Large ribosomal subunit protein uL5 (Alcanivorax borkumensis (strain ATCC 700651 / DSM 11573 / NCIMB 13689 / SK2)).